A 2255-amino-acid polypeptide reads, in one-letter code: Defense against restriction protein B (2255 aa).

A Helicase ATP-binding domain is found at 841-1126 (VRRLSEDGRG…YNMLSHVLPK (286 aa)). ATP is bound at residue 854 to 861 (FGTGLGKT). The DEAH box signature appears at 1052–1055 (DEGH). Residues 1198–1234 (ELDEHQQDAPLTEEQLAAYEELRQQAEAAAKANNGVT) are a coiled coil. In terms of domain architecture, Helicase C-terminal spans 1383 to 1568 (KLKRIICNAL…EMENADANDM (186 aa)). The stretch at 1617 to 1654 (HAAGEDVEVLTAELERSKAELEKTTAEVAKFKQAVMAK) forms a coiled coil.

It belongs to the helicase family.

It localises to the virion. Its function is as follows. Capsid internal protein that is probably ejected along with the viral DNA and prevents degradation of viral DNA by the host EcoB and EcoK restriction-modification antiviral defense systems. In Escherichia phage P1 (Bacteriophage P1), this protein is Defense against restriction protein B.